The following is a 486-amino-acid chain: Cobyric acid synthase (486 aa).

The GATase cobBQ-type domain occupies 250-438; that stretch reads AFRIVVPVPP…LHGMFDTPSA (189 aa). The active-site Nucleophile is the C331. The active site involves H430.

Belongs to the CobB/CobQ family. CobQ subfamily.

It functions in the pathway cofactor biosynthesis; adenosylcobalamin biosynthesis. In terms of biological role, catalyzes amidations at positions B, D, E, and G on adenosylcobyrinic A,C-diamide. NH(2) groups are provided by glutamine, and one molecule of ATP is hydrogenolyzed for each amidation. The protein is Cobyric acid synthase of Herminiimonas arsenicoxydans.